A 92-amino-acid chain; its full sequence is Small ribosomal subunit protein uS19 (92 aa).

This sequence belongs to the universal ribosomal protein uS19 family.

Its function is as follows. Protein S19 forms a complex with S13 that binds strongly to the 16S ribosomal RNA. In Parvibaculum lavamentivorans (strain DS-1 / DSM 13023 / NCIMB 13966), this protein is Small ribosomal subunit protein uS19.